Consider the following 164-residue polypeptide: uncharacterized protein (164 aa).

Positions 1-77 (MGQKKTMGTE…PCSIRDAPFH (77 aa)) are disordered.

This is an uncharacterized protein from Homo sapiens (Human).